A 117-amino-acid polypeptide reads, in one-letter code: Heat shock 70 kDa protein 1-like (117 aa).

Residues 72–75 and 84–87 contribute to the ATP site; these read ERAK and GSTR.

The protein belongs to the heat shock protein 70 family. As to quaternary structure, interacts with PRKN. As to expression, detected at higher levels in caput epididymal spermatazoa than in cauda epididymal spermatazoa (at protein level).

Functionally, molecular chaperone implicated in a wide variety of cellular processes, including protection of the proteome from stress, folding and transport of newly synthesized polypeptides, activation of proteolysis of misfolded proteins and the formation and dissociation of protein complexes. Plays a pivotal role in the protein quality control system, ensuring the correct folding of proteins, the re-folding of misfolded proteins and controlling the targeting of proteins for subsequent degradation. This is achieved through cycles of ATP binding, ATP hydrolysis and ADP release, mediated by co-chaperones. The affinity for polypeptides is regulated by its nucleotide bound state. In the ATP-bound form, it has a low affinity for substrate proteins. However, upon hydrolysis of the ATP to ADP, it undergoes a conformational change that increases its affinity for substrate proteins. It goes through repeated cycles of ATP hydrolysis and nucleotide exchange, which permits cycles of substrate binding and release. Positive regulator of PRKN translocation to damaged mitochondria. This chain is Heat shock 70 kDa protein 1-like, found in Mesocricetus auratus (Golden hamster).